A 1216-amino-acid polypeptide reads, in one-letter code: MATTSNMFLYSLSIQPPSTITRAILGQFSGTKEQQIVAASGSRLTLYRPDPTQGKVVPLMSHDVFGIIRDLASFRLAGSSKDYLIIASDSGRITIVEYLPAQNRFSRIHLETFGKSGVRRVVPGQYLAADPKGRACLIASVERCKLVYVLNRNSQAELTISSPLEAHKNGTLTLSLVALDVGYSNPVFAALEVDYSEVDQDPKGDAAQNVETVLNYYELDLGLNHVVRKWFDVVDSTASMLFQVPGGSDGPSGVLVCGEENITYRHSNQDAFRVPIPRRKGATEDPSRKRNIVSGVMHKLKGSAGAFFFLLQTEDGDLFKVTIDMVEDAEGNPTGEVRRLKIKYFDTIPVSNNLCILKSGFLFVASEFGNHLFYQFEKLGDDDEELEFFSSDFPVDPKEPYEPVYFYPRPTENLALVESIDSMNPLMDLKVANLTEEDAPQIYTVSGKGARSTFRMLKHGLEVNEIVASQLPGTPSAVWTTKLRRDDEYDAYIVLSFTNGTLVLSIGETVEEVSDTGFLSSVPTLAVQQLGDDGLVQVHPKGIRHIRNGVVNEWSSPQHRSIVAAATNERQVAVALSSGEIVYFEMDTDGSLAEYDEKKEMFGTVTSLSLGEVPEGRLRSSYLAVGCDDCTVRILSLDPESTLESKSVQALTAAPSALSIMSMEDSSSGGTTLYLHIGLNSGVYLRTVLDEVTGELTDTRQKFLGPKAVRLFQVSVQKRTCVLALSSRSWLGFSDPVTKGFTMTPLNYEELEWGWNFVSEQCEEGMVGVNGQFLRIFAIEKLGDNVIQKSIPLTYTPRKLAKHPTQRIFYTIEADNNTLAPELREQLMAAPTAVNGDARVLPPDEFGYPRGNGRWASCISVVDPLGDGEELEPGVVQRIDLDNNEAALSMAVVSFASQDGESFLVVGTGKDMVVNPRRFTEGYIHVYRFSEDGRELEFIHKTKVEEPPTALLPFQGRLVAGIGRMLRIYDLGLRQLLRKAQAEVAPQLIVSLNTQGSRIIVGDVQHGLIYVAYKSETNRLIPFADDTIARWTTCTTMVDYDSTAGADKFGNLWILRCPEKASQESDEPGSEVHLVHSRDYLHGTSNRLALMAHVYTQDIPTSICKTNLVVGGQEVLLWGGFQGTIGVLIPFVSREDADFFQSLEQHLRSEDPPLAGRDHLMYRGCYVPVKGVIDGDLCERYTMLPNDKKQMIAGELDRSVREIERKISDIRTRSAF.

Belongs to the RSE1 family. Associated with the spliceosome.

The protein resides in the nucleus. In terms of biological role, involved in pre-mRNA splicing and cell cycle control. The sequence is that of Pre-mRNA-splicing factor RSE1 (RSE1) from Pyricularia oryzae (strain 70-15 / ATCC MYA-4617 / FGSC 8958) (Rice blast fungus).